A 286-amino-acid chain; its full sequence is B3 domain-containing protein REM11 (286 aa).

The TF-B3 1 DNA-binding region spans 1-70; the sequence is MAWNLAIITL…TPMLSLVSTQ (70 aa). The disordered stretch occupies residues 68–114; the sequence is STQSTSHKSQKRECSKHSEKESISAVPSKGKKNRKARSNREERRDSS. Residues 78–89 are compositionally biased toward basic and acidic residues; that stretch reads KRECSKHSEKES. Positions 119-219 form a DNA-binding region, TF-B3 2; the sequence is NRFVTFTPED…RAQVCFYGVF (101 aa).

The protein resides in the nucleus. The chain is B3 domain-containing protein REM11 (REM11) from Arabidopsis thaliana (Mouse-ear cress).